The following is a 345-amino-acid chain: Viral Fc-gamma receptor-like protein UL119 (345 aa).

A signal peptide spans 1 to 23 (MCSVLAIALVVALLGDMHPGVKS). The segment at 23–42 (SSTTSAVTSPSNTTVTSTTS) is disordered. Residues 24-294 (STTSAVTSPS…KSDPLFEDRL (271 aa)) are Virion surface-facing. Residues asparagine 34, asparagine 48, asparagine 95, asparagine 104, asparagine 148, asparagine 179, asparagine 198, asparagine 217, asparagine 225, asparagine 241, asparagine 244, and asparagine 260 are each glycosylated (N-linked (GlcNAc...) asparagine; by host). Positions 91-190 (QVSLNATCKV…TWDLFTYPIY (100 aa)) constitute an Ig-like V-type domain. Residues 295–317 (LAYGVLAFLVFMVIILLYVTYML) traverse the membrane as a helical segment. Residues 318 to 345 (ARRRDWSYKRLEEPVEEKKHPVPYFKQW) lie on the Intravirion side of the membrane.

The protein localises to the virion membrane. Its function is as follows. Serves as a receptor for the Fc part of human IgG. May thus be involved in interfering with host Ig-mediated immune responses. The protein is Viral Fc-gamma receptor-like protein UL119 (UL119/UL118) of Human cytomegalovirus (strain AD169) (HHV-5).